A 438-amino-acid polypeptide reads, in one-letter code: Dol-P-Man:Man(5)GlcNAc(2)-PP-Dol alpha-1,3-mannosyltransferase (438 aa).

Ser-13 is modified (phosphoserine). 11 consecutive transmembrane segments (helical) span residues 41–61 (YTLL…FWVI), 95–115 (TGPL…FYAT), 123–143 (MAQN…FLIY), 149–169 (VPPF…SIFV), 172–192 (LFND…FLAQ), 203–223 (LAVS…FLLL), 231–251 (ALPK…PFLL), 289–309 (FHLA…LCRW), 332–352 (ALTP…GICF), 356–376 (LHYQ…WAMP), and 407–427 (AALH…PESF).

The protein belongs to the glycosyltransferase ALG3 family.

Its subcellular location is the endoplasmic reticulum membrane. The catalysed reaction is an alpha-D-Man-(1-&gt;2)-alpha-D-Man-(1-&gt;2)-alpha-D-Man-(1-&gt;3)-[alpha-D-Man-(1-&gt;6)]-beta-D-Man-(1-&gt;4)-beta-D-GlcNAc-(1-&gt;4)-alpha-D-GlcNAc-diphospho-di-trans,poly-cis-dolichol + a di-trans,poly-cis-dolichyl beta-D-mannosyl phosphate = an alpha-D-Man-(1-&gt;2)-alpha-D-Man-(1-&gt;2)-alpha-D-Man-(1-&gt;3)-[alpha-D-Man-(1-&gt;3)-alpha-D-Man-(1-&gt;6)]-beta-D-Man-(1-&gt;4)-beta-D-GlcNAc-(1-&gt;4)-alpha-D-GlcNAc-diphospho-di-trans,poly-cis-dolichol + a di-trans,poly-cis-dolichyl phosphate + H(+). The protein operates within protein modification; protein glycosylation. Its function is as follows. Dol-P-Man:Man(5)GlcNAc(2)-PP-Dol alpha-1,3-mannosyltransferase that operates in the biosynthetic pathway of dolichol-linked oligosaccharides, the glycan precursors employed in protein asparagine (N)-glycosylation. The assembly of dolichol-linked oligosaccharides begins on the cytosolic side of the endoplasmic reticulum membrane and finishes in its lumen. The sequential addition of sugars to dolichol pyrophosphate produces dolichol-linked oligosaccharides containing fourteen sugars, including two GlcNAcs, nine mannoses and three glucoses. Once assembled, the oligosaccharide is transferred from the lipid to nascent proteins by oligosaccharyltransferases. In the lumen of the endoplasmic reticulum, adds the first dolichyl beta-D-mannosyl phosphate derived mannose in an alpha-1,3 linkage to Man(5)GlcNAc(2)-PP-dolichol to produce Man(6)GlcNAc(2)-PP-dolichol. Man(6)GlcNAc(2)-PP-dolichol is a substrate for ALG9, the following enzyme in the biosynthetic pathway. This chain is Dol-P-Man:Man(5)GlcNAc(2)-PP-Dol alpha-1,3-mannosyltransferase, found in Mus musculus (Mouse).